The sequence spans 552 residues: Two-component response regulator ARR10 (552 aa).

Residues 18–133 form the Response regulatory domain; the sequence is RVLAVDDDQT…ELKNIWQHVV (116 aa). Position 69 is a 4-aspartylphosphate (D69). The interval 139–181 is disordered; the sequence is KKNKSNVSNGSGNCDKANRKRKEQYEEEEEEERGNDNDDPTAQ. A coiled-coil region spans residues 151–173; sequence NCDKANRKRKEQYEEEEEEERGN. Positions 163-177 are enriched in acidic residues; that stretch reads YEEEEEEERGNDNDD. The Nuclear localization signal motif lies at 182 to 185; the sequence is KKPR. The segment at residues 185-235 is a DNA-binding region (myb-like GARP); the sequence is RVLWTHELHNKFLAAVDHLGVERAVPKKILDLMNVDKLTRENVASHLQKFR.

It belongs to the ARR family. Type-B subfamily. Binds the target DNA as a monomer. Post-translationally, two-component system major event consists of a His-to-Asp phosphorelay between a sensor histidine kinase (HK) and a response regulator (RR). In plants, the His-to-Asp phosphorelay involves an additional intermediate named Histidine-containing phosphotransfer protein (HPt). This multistep phosphorelay consists of a His-Asp-His-Asp sequential transfer of a phosphate group between first a His and an Asp of the HK protein, followed by the transfer to a conserved His of the HPt protein and finally the transfer to an Asp in the receiver domain of the RR protein. As to expression, detected in the whole plant. Predominantly expressed in roots and leaves.

The protein resides in the nucleus. Its function is as follows. Transcriptional activator that binds specifically to the DNA sequence 5'-[AG]GATT-3'. Functions as a response regulator involved in His-to-Asp phosphorelay signal transduction system. Phosphorylation of the Asp residue in the receiver domain activates the ability of the protein to promote the transcription of target genes. Could directly activate some type-A response regulators in response to cytokinins. This is Two-component response regulator ARR10 (ARR10) from Arabidopsis thaliana (Mouse-ear cress).